A 373-amino-acid chain; its full sequence is Carboxylesterase/phospholipase LipF (373 aa).

The short motif at 116–118 is the Involved in the stabilization of the negatively charged intermediate by the formation of the oxyanion hole element; that stretch reads HGG. Residues Ser186, Glu285, and His315 contribute to the active site.

The protein belongs to the 'GDXG' lipolytic enzyme family.

It carries out the reaction a carboxylic ester + H2O = an alcohol + a carboxylate + H(+). It catalyses the reaction a 1,2-diacyl-sn-glycero-3-phosphocholine + H2O = phosphocholine + a 1,2-diacyl-sn-glycerol + H(+). Functionally, a short-chain esterase and phospholipase. This chain is Carboxylesterase/phospholipase LipF, found in Mycobacterium tuberculosis (strain CDC 1551 / Oshkosh).